The sequence spans 475 residues: Luvungin A synthase CYP716AC1 (475 aa).

The chain crosses the membrane as a helical span at residues 3–23 (FIILSLLLLSLALYSLYYVII). Cysteine 423 contributes to the heme binding site.

This sequence belongs to the cytochrome P450 family. Heme serves as cofactor. Expressed in flowers, maturing fruits and in juice vesicles.

It is found in the membrane. The catalysed reaction is (21S)-21-acetoxyl-apo-melianone + reduced [NADPH--hemoprotein reductase] + O2 = luvungin A + oxidized [NADPH--hemoprotein reductase] + H2O + H(+). It participates in secondary metabolite biosynthesis; terpenoid biosynthesis. Functionally, monooxygenase involved in the biosynthesis of limonoids triterpene natural products such as limonin, a compound with insecticidal activity responsible for the bitter taste in citrus. Catalyzes the conversion of (21S)-21-acetoxyl-apo-melianone to luvungin A. This is Luvungin A synthase CYP716AC1 from Citrus sinensis (Sweet orange).